A 121-amino-acid polypeptide reads, in one-letter code: Nitrogenase-stabilizing/protective protein NifW (121 aa).

This sequence belongs to the NifW family. As to quaternary structure, homotrimer; associates with NifD.

Functionally, may protect the nitrogenase Fe-Mo protein from oxidative damage. This chain is Nitrogenase-stabilizing/protective protein NifW, found in Methylacidiphilum infernorum (isolate V4) (Methylokorus infernorum (strain V4)).